The following is a 41-amino-acid chain: Large ribosomal subunit protein bL36 (41 aa).

Belongs to the bacterial ribosomal protein bL36 family.

This Opitutus terrae (strain DSM 11246 / JCM 15787 / PB90-1) protein is Large ribosomal subunit protein bL36.